The chain runs to 303 residues: tRNA dimethylallyltransferase (303 aa).

10–17 is a binding site for ATP; it reads GPTASGKS. 12 to 17 contributes to the substrate binding site; sequence TASGKS. The tract at residues 35–38 is interaction with substrate tRNA; the sequence is DSMQ.

It belongs to the IPP transferase family. Monomer. The cofactor is Mg(2+).

The enzyme catalyses adenosine(37) in tRNA + dimethylallyl diphosphate = N(6)-dimethylallyladenosine(37) in tRNA + diphosphate. Its function is as follows. Catalyzes the transfer of a dimethylallyl group onto the adenine at position 37 in tRNAs that read codons beginning with uridine, leading to the formation of N6-(dimethylallyl)adenosine (i(6)A). The protein is tRNA dimethylallyltransferase of Methylobacterium nodulans (strain LMG 21967 / CNCM I-2342 / ORS 2060).